The sequence spans 248 residues: tRNA uridine(34) hydroxylase (248 aa).

One can recognise a Rhodanese domain in the interval 124 to 218 (TKQDVIVVDT…YLEDTQNKNN (95 aa)). The Cysteine persulfide intermediate role is filled by C178.

This sequence belongs to the TrhO family.

It catalyses the reaction uridine(34) in tRNA + AH2 + O2 = 5-hydroxyuridine(34) in tRNA + A + H2O. Functionally, catalyzes oxygen-dependent 5-hydroxyuridine (ho5U) modification at position 34 in tRNAs. This Rickettsia bellii (strain OSU 85-389) protein is tRNA uridine(34) hydroxylase.